The primary structure comprises 267 residues: Trehalose 2-sulfotransferase (267 aa).

Residues Q14, 33 to 39 (EPQEFFQ), P48, and W53 each bind alpha,alpha-trehalose. The active-site Proton acceptor is E36.

The protein belongs to the Stf0 sulfotransferase family. As to quaternary structure, homodimer.

It catalyses the reaction alpha,alpha-trehalose + 3'-phosphoadenylyl sulfate = 2-O-sulfo-alpha,alpha-trehalose + adenosine 3',5'-bisphosphate + H(+). It functions in the pathway glycolipid metabolism. Functionally, catalyzes the sulfuryl group transfer from 3'-phosphoadenosine-5'-phosphosulfate (PAPS) to trehalose, leading to trehalose-2-sulfate (T2S). The sulfation of trehalose is the first step in the biosynthesis of sulfolipid-1 (SL-1), a major cell wall glycolipid and the most abundant sulfated metabolite found in Mycobacterium tuberculosis, that is a potential virulence factor thought to mediate host-pathogen interactions. This chain is Trehalose 2-sulfotransferase, found in Mycobacterium tuberculosis (strain ATCC 35801 / TMC 107 / Erdman).